A 181-amino-acid polypeptide reads, in one-letter code: Peptide deformylase (181 aa).

Residues cysteine 99 and histidine 141 each coordinate Fe cation. Glutamate 142 is an active-site residue. Histidine 145 lines the Fe cation pocket.

It belongs to the polypeptide deformylase family. The cofactor is Fe(2+).

The enzyme catalyses N-terminal N-formyl-L-methionyl-[peptide] + H2O = N-terminal L-methionyl-[peptide] + formate. Functionally, removes the formyl group from the N-terminal Met of newly synthesized proteins. Requires at least a dipeptide for an efficient rate of reaction. N-terminal L-methionine is a prerequisite for activity but the enzyme has broad specificity at other positions. The sequence is that of Peptide deformylase from Chlamydia trachomatis serovar A (strain ATCC VR-571B / DSM 19440 / HAR-13).